A 781-amino-acid chain; its full sequence is Pyrin (781 aa).

The Pyrin domain maps to 1–92; it reads MAKTPSDHLL…AEELHRAAIQ (92 aa). The segment covering 93–111 has biased composition (polar residues); it reads EYSTQENGTDDSAASSSLG. A disordered region spans residues 93–226; that stretch reads EYSTQENGTD…AGGAPGQKEC (134 aa). A compositionally biased stretch (basic and acidic residues) spans 113–126; sequence NKPRSLKTPDHPEG. A compositionally biased stretch (basic residues) spans 153 to 163; the sequence is LSRKPLSKRRE. Ser-242 carries the post-translational modification Phosphoserine. The interaction with RELA stretch occupies residues 266-280; that stretch reads KTAANLDSATEPRAR. Disordered regions lie at residues 270–322 and 336–373; these read NLDS…EGDP and EAVSGHPQASGSRSPGCPRCQDSHERKSPGSLSPQPLP. Residues 370–412 form a B box-type zinc finger; it reads QPLPQCKRHLKQVQLLFCEDHDEPICLICSLSQEHQGHRVRPI. Residues 413–442 are a coiled coil; that stretch reads EEVALEHKKKIQKQLEHLKKLRKSGEEQRS. The short motif at 420–437 is the Nuclear localization signal element; it reads KKKIQKQLEHLKKLRKSG. The segment at 420–582 is required for homotrimerization and induction of pyroptosomes; that stretch reads KKKIQKQLEH…YFSETLRSEM (163 aa). The region spanning 580–775 is the B30.2/SPRY domain; the sequence is SEMEMFNVPE…NTAPLTICPV (196 aa).

As to quaternary structure, homotrimer. Interacts (via the B box-type zinc finger) with PSTPIP1. Interacts (via the B30.2/SPRY domain) with several components of the inflammasome complex, including CASP1 p20 and p10 subunits, CASP5, PYCARD, NLRP1, NLRP2 and NLRP3, as well as with unprocessed IL1B; this interaction may lead to autophagic degradation of these proteins. Component of the AIM2 PANoptosome complex, a multiprotein complex that drives inflammatory cell death (PANoptosis). Interacts with NFKBIA and RELA. Interacts weakly with VASP and ACTR3. Interacts with active ULK1 (phosphorylated on 'Ser-317') and BECN1 simultaneously. Also interacts with ATG16L1 (via WD repeats), and with ATG8 family members, including GABARAP, GABARAPL1 and, to a lesser extent, GABARAPL2, MAP1LC3A/LC3A and MAP1LC3C/LC3C. Interacts with TRIM21. Interacts with YWHAB, YWHAE, YWHAG, YWHAH, YWHAQ and YWHAZ; the interaction is required for the down-regulation of pyrin pro-inflammatory activity. Post-translationally, cleaved by CASP1. The N-terminal cleavage product localizes to the nucleus as a filamentous network and to the cytoplasm, interacts more strongly with RELA and NFKBIA than the full-length protein, enhances the nuclear localization of RELA and induces NFKBIA proteolysis. The C-terminal cleavage product localizes to the cytoplasm. In terms of processing, phosphorylation at Ser-242 is required for the interaction with 14-3-3 proteins and down-regulation of pyrin pro-inflammatory activity. Degraded along with the delivery of its substrates to autolysosomal compartments (at protein level). As to expression, expressed in peripheral blood leukocytes, particularly in mature granulocytes and to a lesser extent in monocytes but not in lymphocytes. Detected in spleen, lung and muscle, probably as a result of leukocyte infiltration in these tissues. Not expressed in thymus, prostate, testis, ovary, small intestine, colon, heart, brain, placenta, liver, kidney, pancreas. Expression detected in several myeloid leukemic, colon cancer, and prostate cancer cell lines.

It is found in the cytoplasm. The protein resides in the cytoskeleton. Its subcellular location is the cell projection. It localises to the ruffle. The protein localises to the lamellipodium. It is found in the nucleus. The protein resides in the cytoplasmic vesicle. Its subcellular location is the autophagosome. Functionally, involved in the regulation of innate immunity and the inflammatory response in response to IFNG/IFN-gamma. Organizes autophagic machinery by serving as a platform for the assembly of ULK1, Beclin 1/BECN1, ATG16L1, and ATG8 family members and recognizes specific autophagy targets, thus coordinating target recognition with assembly of the autophagic apparatus and initiation of autophagy. Acts as an autophagy receptor for the degradation of several inflammasome components, including CASP1, NLRP1 and NLRP3, hence preventing excessive IL1B- and IL18-mediated inflammation. However, it can also have a positive effect in the inflammatory pathway, acting as an innate immune sensor that triggers PYCARD/ASC specks formation, caspase-1 activation, and IL1B and IL18 production. Together with AIM2, also acts as a mediator of pyroptosis, necroptosis and apoptosis (PANoptosis), an integral part of host defense against pathogens, in response to bacterial infection. It is required for PSTPIP1-induced PYCARD/ASC oligomerization and inflammasome formation. Recruits PSTPIP1 to inflammasomes, and is required for PSTPIP1 oligomerization. The protein is Pyrin of Homo sapiens (Human).